The following is a 269-amino-acid chain: Formamidopyrimidine-DNA glycosylase (269 aa).

Catalysis depends on P2, which acts as the Schiff-base intermediate with DNA. E3 (proton donor) is an active-site residue. Residue K57 is the Proton donor; for beta-elimination activity of the active site. The DNA site is built by H90, R109, and K150. The segment at 235–269 (QVYGKGGLPCPKCGTELAEVKIGQRATVYCSQCQQ) adopts an FPG-type zinc-finger fold. R259 serves as the catalytic Proton donor; for delta-elimination activity.

This sequence belongs to the FPG family. As to quaternary structure, monomer. Zn(2+) is required as a cofactor.

It catalyses the reaction Hydrolysis of DNA containing ring-opened 7-methylguanine residues, releasing 2,6-diamino-4-hydroxy-5-(N-methyl)formamidopyrimidine.. The enzyme catalyses 2'-deoxyribonucleotide-(2'-deoxyribose 5'-phosphate)-2'-deoxyribonucleotide-DNA = a 3'-end 2'-deoxyribonucleotide-(2,3-dehydro-2,3-deoxyribose 5'-phosphate)-DNA + a 5'-end 5'-phospho-2'-deoxyribonucleoside-DNA + H(+). Functionally, involved in base excision repair of DNA damaged by oxidation or by mutagenic agents. Acts as a DNA glycosylase that recognizes and removes damaged bases. Has a preference for oxidized purines, such as 7,8-dihydro-8-oxoguanine (8-oxoG). Has AP (apurinic/apyrimidinic) lyase activity and introduces nicks in the DNA strand. Cleaves the DNA backbone by beta-delta elimination to generate a single-strand break at the site of the removed base with both 3'- and 5'-phosphates. This chain is Formamidopyrimidine-DNA glycosylase, found in Photobacterium damsela subsp. piscicida (Pasteurella piscicida).